Consider the following 377-residue polypeptide: Nitric oxide reductase FlRd-NAD(+) reductase (377 aa).

This sequence belongs to the FAD-dependent oxidoreductase family. It depends on FAD as a cofactor.

It localises to the cytoplasm. It catalyses the reaction 2 reduced [nitric oxide reductase rubredoxin domain] + NAD(+) + H(+) = 2 oxidized [nitric oxide reductase rubredoxin domain] + NADH. It participates in nitrogen metabolism; nitric oxide reduction. One of at least two accessory proteins for anaerobic nitric oxide (NO) reductase. Reduces the rubredoxin moiety of NO reductase. In Salmonella typhi, this protein is Nitric oxide reductase FlRd-NAD(+) reductase.